A 299-amino-acid chain; its full sequence is Lymphocyte antigen 6 complex locus protein G6f (299 aa).

The signal sequence occupies residues 1–19; it reads MAVLFLLLLFLCGLPQAET. The 105-residue stretch at 20–124 folds into the Ig-like V-type domain; that stretch reads DSIQAIYVVL…YRYQNWRVYD (105 aa). The Extracellular portion of the chain corresponds to 20–237; sequence DSIQAIYVVL…APSADWDVAW (218 aa). Cys37 and Cys108 are joined by a disulfide. A glycan (N-linked (GlcNAc...) asparagine) is linked at Asn90. Residues 238–258 traverse the membrane as a helical segment; sequence ILTLLLTVGQGFTIVVLGVML. Topologically, residues 259-299 are cytoplasmic; that stretch reads WRQRAQGAQHRNASFPQFKPEIQVYENIHLAHLSPPAPKTR. Residue Tyr283 is modified to Phosphotyrosine.

As to quaternary structure, homodimer; disulfide-linked. Interacts with GRB2 and GRB7 in a phosphorylation-dependent manner. Post-translationally, N-glycosylated.

The protein localises to the cell membrane. Its function is as follows. May play a role in the downstream signal transduction pathways involving GRB2 and GRB7. The sequence is that of Lymphocyte antigen 6 complex locus protein G6f (LY6G6F) from Bos taurus (Bovine).